The primary structure comprises 481 residues: Ribulose bisphosphate carboxylase large chain (481 aa).

The propeptide occupies 1–2; that stretch reads MS. The residue at position 3 (Pro3) is an N-acetylproline. Lys14 carries the N6,N6,N6-trimethyllysine modification. Substrate contacts are provided by Asn123 and Thr173. Residue Lys175 is the Proton acceptor of the active site. Lys177 serves as a coordination point for substrate. Positions 201, 203, and 204 each coordinate Mg(2+). Residue Lys201 is modified to N6-carboxylysine. His294 (proton acceptor) is an active-site residue. Residues Arg295, His327, and Ser379 each coordinate substrate.

It belongs to the RuBisCO large chain family. Type I subfamily. Heterohexadecamer of 8 large chains and 8 small chains; disulfide-linked. The disulfide link is formed within the large subunit homodimers. Requires Mg(2+) as cofactor. Post-translationally, the disulfide bond which can form in the large chain dimeric partners within the hexadecamer appears to be associated with oxidative stress and protein turnover.

The protein resides in the plastid. Its subcellular location is the chloroplast. It carries out the reaction 2 (2R)-3-phosphoglycerate + 2 H(+) = D-ribulose 1,5-bisphosphate + CO2 + H2O. The enzyme catalyses D-ribulose 1,5-bisphosphate + O2 = 2-phosphoglycolate + (2R)-3-phosphoglycerate + 2 H(+). Functionally, ruBisCO catalyzes two reactions: the carboxylation of D-ribulose 1,5-bisphosphate, the primary event in carbon dioxide fixation, as well as the oxidative fragmentation of the pentose substrate in the photorespiration process. Both reactions occur simultaneously and in competition at the same active site. The sequence is that of Ribulose bisphosphate carboxylase large chain from Coffea arabica (Arabian coffee).